We begin with the raw amino-acid sequence, 271 residues long: Mannosyl-3-phosphoglycerate phosphatase (271 aa).

Asp13 serves as the catalytic Nucleophile. Residues Asp13, Asp15, and Asp214 each coordinate Mg(2+).

It belongs to the HAD-like hydrolase superfamily. MPGP family. Mg(2+) serves as cofactor.

Its subcellular location is the cytoplasm. The catalysed reaction is 2-O-(alpha-D-mannosyl)-3-phosphoglycerate + H2O = (2R)-2-O-(alpha-D-mannosyl)-glycerate + phosphate. The sequence is that of Mannosyl-3-phosphoglycerate phosphatase from Escherichia coli O7:K1 (strain IAI39 / ExPEC).